Here is a 417-residue protein sequence, read N- to C-terminus: Probable lysophospholipase BODYGUARD 4 (417 aa).

Positions 1 to 49 are cleaved as a signal peptide; the sequence is MSFPRKFGTAIHAALSFIVFFFLDLLDAILCVVYEFVDEILEENSTGCY. Cysteine 50 is lipidated: N-palmitoyl cysteine. Residues 150–259 enclose the AB hydrolase-1 domain; it reads VIFIHGFMGS…PPYFPSSVEG (110 aa). Histidine 154 is an active-site residue. Residue serine 225 is the Nucleophile of the active site. Residues aspartate 367 and histidine 395 each act as charge relay system in the active site.

As to expression, expressed in epidermal cells.

It localises to the cell membrane. It is found in the secreted. Its subcellular location is the cell wall. Involved in cuticle development and morphogenesis. This chain is Probable lysophospholipase BODYGUARD 4, found in Arabidopsis thaliana (Mouse-ear cress).